A 129-amino-acid polypeptide reads, in one-letter code: ATP synthase epsilon chain (129 aa).

It belongs to the ATPase epsilon chain family. As to quaternary structure, F-type ATPases have 2 components, CF(1) - the catalytic core - and CF(0) - the membrane proton channel. CF(1) has five subunits: alpha(3), beta(3), gamma(1), delta(1), epsilon(1). CF(0) has three main subunits: a, b and c.

It is found in the cell inner membrane. Functionally, produces ATP from ADP in the presence of a proton gradient across the membrane. This Campylobacter jejuni subsp. jejuni serotype O:2 (strain ATCC 700819 / NCTC 11168) protein is ATP synthase epsilon chain.